We begin with the raw amino-acid sequence, 371 residues long: Putative glutamate--cysteine ligase 2 (371 aa).

It belongs to the glutamate--cysteine ligase type 2 family. YbdK subfamily.

It catalyses the reaction L-cysteine + L-glutamate + ATP = gamma-L-glutamyl-L-cysteine + ADP + phosphate + H(+). Its function is as follows. ATP-dependent carboxylate-amine ligase which exhibits weak glutamate--cysteine ligase activity. The protein is Putative glutamate--cysteine ligase 2 of Cupriavidus pinatubonensis (strain JMP 134 / LMG 1197) (Cupriavidus necator (strain JMP 134)).